The primary structure comprises 602 residues: MRGWNVMVIGGGHAGLEAAWAAAKFARVAVLVSNPATVGRMPCNPAVGGPGKSQLVFEVQALGGLMGRLADDTAIHTRVLNASKGPAVQSLRVQNERDAYAERAQEILLGHSGIDVVRGEAADLEPDGCGGWFVVTTDGRRFHARSVVVAAGTFMRGVTWYGRYSRPEGRQGEPPSRFLSAPLARAGHRLKRYKTGTPPRVRADSVRFADLLEIPADPQPRGFTGRPGPRAAESPTWQTHTTPETHRLIQENLHESPMYAGDIAGLGPRYCPSIEDKVVRFAHHDRHLLFVEPDGVQTSEVYLQGFSSSLPPALQDRLVRSLPGFEAAVIQRYAYAVEYDVVDSTELTLNLESRLLPGIFTAGQINGTSGYEEAAAQGLVAGTAAARRALELEELQISRETSYLGVLLDDLVLKGSDEPYRMMTSRVEHRLIVRQDNADERLTELGVKLGLVDEDTQRAVQAKYRRVAEGIRALQMQRVQGQTGDAWLRRPEFALEDVEALGFKLPALSPEEREAVAIRVKYAGYIERAERQLAAEDRARELSLRGVAFGEIASLSNEAREKLERVRPLTVAQAAGIPGVRHADISALLVHLRRTGNVSRET.

10–15 (GGGHAG) is an FAD binding site. The disordered stretch occupies residues 217–242 (DPQPRGFTGRPGPRAAESPTWQTHTT). Residue 267 to 281 (GPRYCPSIEDKVVRF) participates in NAD(+) binding.

This sequence belongs to the MnmG family. Homodimer. Heterotetramer of two MnmE and two MnmG subunits. It depends on FAD as a cofactor.

The protein resides in the cytoplasm. Its function is as follows. NAD-binding protein involved in the addition of a carboxymethylaminomethyl (cmnm) group at the wobble position (U34) of certain tRNAs, forming tRNA-cmnm(5)s(2)U34. This chain is tRNA uridine 5-carboxymethylaminomethyl modification enzyme MnmG, found in Deinococcus geothermalis (strain DSM 11300 / CIP 105573 / AG-3a).